The chain runs to 258 residues: Synapse differentiation-inducing gene protein 1 (258 aa).

Residues 1–181 lie on the Cytoplasmic side of the membrane; it reads MDGIVEQKSV…NFLMMPPRDH (181 aa). Phosphoserine is present on Ser137. A helical membrane pass occupies residues 182-202; the sequence is LGLSVFSMLCCFWPLGIAAFY. The Extracellular portion of the chain corresponds to 203–228; the sequence is LSHETNKAVAKGDFHQASTSSRRALF. Positions 229–249 form an intramembrane region, helical; the sequence is LAVLSITIGTGIYVGVAVALI. The Extracellular portion of the chain corresponds to 250–258; the sequence is AYLSKNNHL.

This sequence belongs to the CD225/Dispanin family. In terms of assembly, homodimer. Interacts with GRIA1 and GRIA2. In terms of tissue distribution, enriched in the cerebellum and also expressed in the neocortex and modestly in the hippocampus (at protein level). Expressed in hippocampal neurons, both in cell body and neurites, however its presence is enriched at excitatory synapses and also found in postsynaptic cells.

It localises to the cell membrane. The protein resides in the early endosome membrane. It is found in the postsynaptic density membrane. Its subcellular location is the synapse. The protein localises to the cell projection. It localises to the dendrite. The protein resides in the dendritic spine. Functionally, may regulate AMPA receptor content at nascent synapses, and have a role in postsynaptic development and maturation. This chain is Synapse differentiation-inducing gene protein 1 (Syndig1), found in Rattus norvegicus (Rat).